A 1230-amino-acid chain; its full sequence is Formin-like protein 14 (1230 aa).

Positions 1-194 (MSLLSRFFYK…QYVARRNINS (194 aa)) constitute a Phosphatase tensin-type domain. Catalysis depends on cysteine 127, which acts as the Phosphocysteine intermediate. Positions 200-339 (ERALSLDCVI…FRAEVLFGEV (140 aa)) constitute a C2 tensin-type domain. Disordered regions lie at residues 412–432 (FNSP…SSDE), 460–822 (HESS…LKPL), and 1187–1230 (ENEK…RHRT). The segment covering 484-496 (DNPLNLPSDPPSS) has biased composition (low complexity). Composition is skewed to pro residues over residues 503–514 (LPPPPPPPPPPL), 524–535 (SQPPPPPPPPPL), 545–556 (SQPPPPPPPPPL), and 566–575 (SQPPPPPPLP). Positions 579-591 (NRDPLTTLHQPIN) are enriched in polar residues. Composition is skewed to pro residues over residues 592–630 (KTPP…PPPS), 637–649 (PSAP…PPPS), 660–672 (QPPP…PPTR), 679–688 (APPPPPPPPT), 699–711 (PSTP…PPPK), 718–728 (PKPPAPPPLPP), and 735–766 (APPP…PPPG). Residues 809–1207 (VPTAAPKKTA…KLEKEAIKEK (399 aa)) enclose the FH2 domain. Basic and acidic residues predominate over residues 1187-1215 (ENEKQAEAEKKKLEKEAIKEKSATKKDGV).

The protein belongs to the formin-like family. Class-II subfamily.

This is Formin-like protein 14 (FH14) from Arabidopsis thaliana (Mouse-ear cress).